Consider the following 315-residue polypeptide: Malate dehydrogenase (315 aa).

NAD(+)-binding positions include 7 to 12 and D32; that span reads GAGNIG. Positions 81 and 87 each coordinate substrate. NAD(+) is bound by residues N94 and 117–119; that span reads VTN. Substrate is bound by residues N119 and R150. The active-site Proton acceptor is H174.

This sequence belongs to the LDH/MDH superfamily. MDH type 3 family.

It catalyses the reaction (S)-malate + NAD(+) = oxaloacetate + NADH + H(+). Its function is as follows. Catalyzes the reversible oxidation of malate to oxaloacetate. The protein is Malate dehydrogenase of Neorickettsia sennetsu (strain ATCC VR-367 / Miyayama) (Ehrlichia sennetsu).